Reading from the N-terminus, the 433-residue chain is Glucose-1-phosphate adenylyltransferase (433 aa).

Residues Tyr-117, Gly-182, 197-198 (EK), and Ser-215 each bind alpha-D-glucose 1-phosphate.

Belongs to the bacterial/plant glucose-1-phosphate adenylyltransferase family. As to quaternary structure, homotetramer.

It carries out the reaction alpha-D-glucose 1-phosphate + ATP + H(+) = ADP-alpha-D-glucose + diphosphate. Its pathway is glycan biosynthesis; glycogen biosynthesis. In terms of biological role, involved in the biosynthesis of ADP-glucose, a building block required for the elongation reactions to produce glycogen. Catalyzes the reaction between ATP and alpha-D-glucose 1-phosphate (G1P) to produce pyrophosphate and ADP-Glc. This is Glucose-1-phosphate adenylyltransferase from Nitrosomonas europaea (strain ATCC 19718 / CIP 103999 / KCTC 2705 / NBRC 14298).